The sequence spans 393 residues: Protein phosphatase 2C homolog 4 (393 aa).

One can recognise a PPM-type phosphatase domain in the interval 33–368 (YNCVGSMQGY…DNMTAIIVVL (336 aa)). Mn(2+) is bound by residues Asp-83, Gly-84, Asp-310, and Asp-359.

It belongs to the PP2C family. Mg(2+) is required as a cofactor. It depends on Mn(2+) as a cofactor.

The enzyme catalyses O-phospho-L-seryl-[protein] + H2O = L-seryl-[protein] + phosphate. It carries out the reaction O-phospho-L-threonyl-[protein] + H2O = L-threonyl-[protein] + phosphate. This is Protein phosphatase 2C homolog 4 (PTC4) from Saccharomyces cerevisiae (strain ATCC 204508 / S288c) (Baker's yeast).